The following is a 292-amino-acid chain: Ribosome-inactivating protein saporin-2 (292 aa).

An N-terminal signal peptide occupies residues 1 to 24; the sequence is MKIYVVATIAWILLQFSAWTTTDA. E200 is a catalytic residue.

This sequence belongs to the ribosome-inactivating protein family. Type 1 RIP subfamily.

It carries out the reaction Endohydrolysis of the N-glycosidic bond at one specific adenosine on the 28S rRNA.. In terms of biological role, ribosome-inactivating protein of type 1, inhibits protein synthesis in animal cells. Useful as immunotoxin for pharmacological applications. The polypeptide is Ribosome-inactivating protein saporin-2 (SAP2) (Saponaria officinalis (Common soapwort)).